Consider the following 346-residue polypeptide: Putative isoaspartyl peptidase/L-asparaginase (346 aa).

The active-site Nucleophile is threonine 207. Residues arginine 235–aspartate 238 and threonine 257–glycine 260 contribute to the substrate site.

The protein belongs to the Ntn-hydrolases family. Heterodimer of an alpha and beta chain produced by autocleavage. Post-translationally, cleaved into an alpha and beta chain by autocatalysis; this activates the enzyme. The N-terminal residue of the beta subunit is responsible for the nucleophile hydrolase activity.

It carries out the reaction Cleavage of a beta-linked Asp residue from the N-terminus of a polypeptide.. It catalyses the reaction L-asparagine + H2O = L-aspartate + NH4(+). Its function is as follows. Has both L-asparaginase and beta-aspartyl peptidase activity. Does not have aspartylglucosaminidase activity and is inactive toward GlcNAc-L-Asn. Likewise, has no activity toward glutamine. In Dictyostelium discoideum (Social amoeba), this protein is Putative isoaspartyl peptidase/L-asparaginase.